The following is a 92-amino-acid chain: N(2)-fixation sustaining protein CowN (92 aa).

This sequence belongs to the CowN family.

Functionally, is required to sustain N(2)-dependent growth in the presence of low levels of carbon monoxide (CO). Probably acts by protecting the N(2) fixation ability of the nitrogenase complex, which is inactivated in the presence of CO. The polypeptide is N(2)-fixation sustaining protein CowN (Cereibacter sphaeroides (strain KD131 / KCTC 12085) (Rhodobacter sphaeroides)).